The following is a 681-amino-acid chain: DNA-directed RNA polymerase subunit beta' (681 aa).

Zn(2+) is bound by residues Cys-69, Cys-71, Cys-87, and Cys-90. Positions 489, 491, and 493 each coordinate Mg(2+).

Belongs to the RNA polymerase beta' chain family. RpoC1 subfamily. As to quaternary structure, in plastids the minimal PEP RNA polymerase catalytic core is composed of four subunits: alpha, beta, beta', and beta''. When a (nuclear-encoded) sigma factor is associated with the core the holoenzyme is formed, which can initiate transcription. Requires Mg(2+) as cofactor. Zn(2+) serves as cofactor.

It is found in the plastid. Its subcellular location is the chloroplast. It carries out the reaction RNA(n) + a ribonucleoside 5'-triphosphate = RNA(n+1) + diphosphate. Functionally, DNA-dependent RNA polymerase catalyzes the transcription of DNA into RNA using the four ribonucleoside triphosphates as substrates. The polypeptide is DNA-directed RNA polymerase subunit beta' (Nicotiana tomentosiformis (Tobacco)).